A 162-amino-acid chain; its full sequence is MSSLRLLASAARRATTHVAYTRRGYAEISDKLKLSLALPHKAIFSSQDVVQVNIPAESGDMGILSSHVPSIEPLRPGVVEVVEDSGSQKWFVSGGFATVHPNNRLTINVVEAAPLEDFSIEAIRANLQEANKVAAGSGSEADKMEAQIEAEVYEALQHALAK.

The transit peptide at 1–25 (MSSLRLLASAARRATTHVAYTRRGY) directs the protein to the mitochondrion.

Belongs to the ATPase epsilon chain family. As to quaternary structure, F-type ATPases have 2 components, CF(1) - the catalytic core - and CF(0) - the membrane proton channel. CF(1) has five subunits: alpha(3), beta(3), gamma(1), delta(1), epsilon(1). CF(0) has three main subunits: a, b and c.

It is found in the mitochondrion. The protein resides in the mitochondrion inner membrane. Functionally, mitochondrial membrane ATP synthase (F(1)F(0) ATP synthase or Complex V) produces ATP from ADP in the presence of a proton gradient across the membrane which is generated by electron transport complexes of the respiratory chain. F-type ATPases consist of two structural domains, F(1) - containing the extramembraneous catalytic core, and F(0) - containing the membrane proton channel, linked together by a central stalk and a peripheral stalk. During catalysis, ATP turnover in the catalytic domain of F(1) is coupled via a rotary mechanism of the central stalk subunits to proton translocation. Part of the complex F(1) domain and of the central stalk which is part of the complex rotary element. Rotation of the central stalk against the surrounding alpha(3)beta(3) subunits leads to hydrolysis of ATP in three separate catalytic sites on the beta subunits. This Agaricus bisporus (White button mushroom) protein is ATP synthase subunit delta, mitochondrial (atpD).